The following is a 95-amino-acid chain: Protein TusB (95 aa).

This sequence belongs to the DsrH/TusB family. In terms of assembly, heterohexamer, formed by a dimer of trimers. The hexameric TusBCD complex contains 2 copies each of TusB, TusC and TusD. The TusBCD complex interacts with TusE.

The protein localises to the cytoplasm. Its function is as follows. Part of a sulfur-relay system required for 2-thiolation of 5-methylaminomethyl-2-thiouridine (mnm(5)s(2)U) at tRNA wobble positions. This chain is Protein TusB, found in Shigella dysenteriae serotype 1 (strain Sd197).